Reading from the N-terminus, the 732-residue chain is Asp/Glu-specific dipeptidyl-peptidase (732 aa).

An N-terminal signal peptide occupies residues 1-18 (MRIALVATLVLTSGIANA). Active-site charge relay system residues include histidine 80, aspartate 215, and serine 666.

The protein belongs to the peptidase S46 family.

Its function is as follows. Catalyzes the removal of dipeptides from the N-terminus of oligopeptides. Shows a strict specificity for acidic residues (Asp or Glu) in the P1 position, and has probably a hydrophobic residue preference at the P2 position. Preferentially cleaves the synthetic substrate Leu-Glu-methylcoumaryl-7-amide (Leu-Glu-MCA) as compared to Leu-Asp-MCA. In Shewanella putrefaciens (strain CN-32 / ATCC BAA-453), this protein is Asp/Glu-specific dipeptidyl-peptidase (dpp11).